The sequence spans 311 residues: Aspartate carbamoyltransferase catalytic subunit (311 aa).

Residues Arg-55 and Thr-56 each contribute to the carbamoyl phosphate site. L-aspartate is bound at residue Lys-85. The carbamoyl phosphate site is built by Arg-106, His-135, and Gln-138. Residues Arg-168 and Arg-230 each contribute to the L-aspartate site. Residues Leu-268 and Pro-269 each contribute to the carbamoyl phosphate site.

It belongs to the aspartate/ornithine carbamoyltransferase superfamily. ATCase family. In terms of assembly, heterododecamer (2C3:3R2) of six catalytic PyrB chains organized as two trimers (C3), and six regulatory PyrI chains organized as three dimers (R2).

It carries out the reaction carbamoyl phosphate + L-aspartate = N-carbamoyl-L-aspartate + phosphate + H(+). It participates in pyrimidine metabolism; UMP biosynthesis via de novo pathway; (S)-dihydroorotate from bicarbonate: step 2/3. Its function is as follows. Catalyzes the condensation of carbamoyl phosphate and aspartate to form carbamoyl aspartate and inorganic phosphate, the committed step in the de novo pyrimidine nucleotide biosynthesis pathway. The sequence is that of Aspartate carbamoyltransferase catalytic subunit from Klebsiella pneumoniae (strain 342).